The following is a 201-amino-acid chain: Large ribosomal subunit protein mL61 (201 aa).

A disordered region spans residues 87–118 (RDDKDAKPSSTPFPTSSADGSSPAPKPAQGER). Positions 94 to 106 (PSSTPFPTSSADG) are enriched in polar residues.

Belongs to the mitochondrion-specific ribosomal protein mL61 family. Component of the mitochondrial large ribosomal subunit (mt-LSU). Mature N.crassa 74S mitochondrial ribosomes consist of a small (37S) and a large (54S) subunit. The 37S small subunit contains a 16S ribosomal RNA (16S mt-rRNA) and 32 different proteins. The 54S large subunit contains a 23S rRNA (23S mt-rRNA) and 42 different proteins.

Its subcellular location is the mitochondrion. Functionally, component of the mitochondrial ribosome (mitoribosome), a dedicated translation machinery responsible for the synthesis of mitochondrial genome-encoded proteins, including at least some of the essential transmembrane subunits of the mitochondrial respiratory chain. The mitoribosomes are attached to the mitochondrial inner membrane and translation products are cotranslationally integrated into the membrane. The protein is Large ribosomal subunit protein mL61 (mrp49) of Neurospora crassa (strain ATCC 24698 / 74-OR23-1A / CBS 708.71 / DSM 1257 / FGSC 987).